The primary structure comprises 82 residues: Large ribosomal subunit protein uL23 (82 aa).

This sequence belongs to the universal ribosomal protein uL23 family. Part of the 50S ribosomal subunit. Contacts protein L29.

Binds to 23S rRNA. One of the proteins that surrounds the polypeptide exit tunnel on the outside of the ribosome. The chain is Large ribosomal subunit protein uL23 from Methanosarcina mazei (strain ATCC BAA-159 / DSM 3647 / Goe1 / Go1 / JCM 11833 / OCM 88) (Methanosarcina frisia).